We begin with the raw amino-acid sequence, 340 residues long: Glutamine synthetase (340 aa).

The 80-residue stretch at 3-82 folds into the GS beta-grasp domain; sequence IKAEYIWIDG…LCEVLHTDLT (80 aa). The GS catalytic domain maps to 88 to 340; it reads TRALLRPVAE…CTELARREQI (253 aa). 4 residues coordinate Mg(2+): Glu-109, Glu-111, Glu-171, and Glu-178. Glu-276 lines the L-glutamate pocket.

It belongs to the glutamine synthetase family. In terms of assembly, homooctamer and homotetramer. Requires Mg(2+) as cofactor.

It localises to the cytoplasm. It catalyses the reaction L-glutamate + NH4(+) + ATP = L-glutamine + ADP + phosphate + H(+). Its function is as follows. Catalyzes the ATP-dependent biosynthesis of glutamine from glutamate and ammonia. The protein is Glutamine synthetase of Streptomyces hygroscopicus.